The primary structure comprises 198 residues: MEHYISLLVKSIFIENMALSFFLGMCTFLAVSKKVKTSFGLGVAVVVVLTIAVPVNNLVYNLVLKENALVEGVDLSFLNFITFIGVIAALVQILEMVLDRFFPPLYNALGIFLPLITVNCAIFGGVSFMVQRDYNFAESIVYGFGSGVGWMLAIVALAGIREKMKYSDVPPGLRGLGITFITVGLMALGFMSFSGVQL.

A run of 6 helical transmembrane segments spans residues 11-31 (SIFI…FLAV), 39-59 (FGLG…NNLV), 77-97 (FLNF…LEMV), 110-130 (GIFL…SFMV), 140-160 (IVYG…LAGI), and 176-196 (LGIT…FSGV).

It belongs to the NqrDE/RnfAE family. In terms of assembly, composed of six subunits; NqrA, NqrB, NqrC, NqrD, NqrE and NqrF.

Its subcellular location is the cell inner membrane. It catalyses the reaction a ubiquinone + n Na(+)(in) + NADH + H(+) = a ubiquinol + n Na(+)(out) + NAD(+). In terms of biological role, NQR complex catalyzes the reduction of ubiquinone-1 to ubiquinol by two successive reactions, coupled with the transport of Na(+) ions from the cytoplasm to the periplasm. NqrA to NqrE are probably involved in the second step, the conversion of ubisemiquinone to ubiquinol. The chain is Na(+)-translocating NADH-quinone reductase subunit E from Vibrio campbellii (strain ATCC BAA-1116).